The sequence spans 628 residues: 1-deoxy-D-xylulose-5-phosphate synthase (628 aa).

Thiamine diphosphate contacts are provided by residues His72 and 113–115 (GHS). Asp144 provides a ligand contact to Mg(2+). Residues 145 to 146 (GA), Asn173, Tyr284, and Glu366 contribute to the thiamine diphosphate site. Mg(2+) is bound at residue Asn173.

Belongs to the transketolase family. DXPS subfamily. In terms of assembly, homodimer. Mg(2+) serves as cofactor. The cofactor is thiamine diphosphate.

The enzyme catalyses D-glyceraldehyde 3-phosphate + pyruvate + H(+) = 1-deoxy-D-xylulose 5-phosphate + CO2. The protein operates within metabolic intermediate biosynthesis; 1-deoxy-D-xylulose 5-phosphate biosynthesis; 1-deoxy-D-xylulose 5-phosphate from D-glyceraldehyde 3-phosphate and pyruvate: step 1/1. Its function is as follows. Catalyzes the acyloin condensation reaction between C atoms 2 and 3 of pyruvate and glyceraldehyde 3-phosphate to yield 1-deoxy-D-xylulose-5-phosphate (DXP). This is 1-deoxy-D-xylulose-5-phosphate synthase from Shouchella clausii (strain KSM-K16) (Alkalihalobacillus clausii).